The sequence spans 316 residues: Dof zinc finger protein DOF5.7 (316 aa).

Residues 1-42 (MSSHTNLPSPKPVPKPDHRISGTSQTKKPPSSSVAQDQQNLK) are disordered. Polar residues predominate over residues 21 to 42 (SGTSQTKKPPSSSVAQDQQNLK). Residues 41–95 (LKCPRCNSPNTKFCYYNNYSLSQPRHFCKSCRRYWTRGGALRNVPIGGGCRKTKK) form a Dof-type zinc finger. Zn(2+) contacts are provided by C43, C46, C68, and C71. 2 disordered regions span residues 92–111 (KTKK…SSSS) and 257–294 (NSSS…NTGG). Residues 101-111 (SSMNTLPSSSS) are compositionally biased toward low complexity. Over residues 257–291 (NSSSPSSPTKKGDNQTEWYFGNNSDNEGVISNNAN) the composition is skewed to polar residues.

It localises to the nucleus. Transcription factor that binds specifically to a 5'-AA[AG]G-3' consensus core sequence. The sequence is that of Dof zinc finger protein DOF5.7 (DOF5.7) from Arabidopsis thaliana (Mouse-ear cress).